We begin with the raw amino-acid sequence, 137 residues long: Ribonuclease P protein component (137 aa).

It belongs to the RnpA family. Consists of a catalytic RNA component (M1 or rnpB) and a protein subunit.

It catalyses the reaction Endonucleolytic cleavage of RNA, removing 5'-extranucleotides from tRNA precursor.. Its function is as follows. RNaseP catalyzes the removal of the 5'-leader sequence from pre-tRNA to produce the mature 5'-terminus. It can also cleave other RNA substrates such as 4.5S RNA. The protein component plays an auxiliary but essential role in vivo by binding to the 5'-leader sequence and broadening the substrate specificity of the ribozyme. The sequence is that of Ribonuclease P protein component from Porphyromonas gingivalis (strain ATCC BAA-308 / W83).